The primary structure comprises 360 residues: Probable arginine kinase ZC434.8 (360 aa).

One can recognise a Phosphagen kinase N-terminal domain in the interval 10-92; that stretch reads SIEEVYTKLQ…FNPVIEEYHN (83 aa). Position 65-69 (65-69) interacts with substrate; that stretch reads GVGIY. Residues 122–359 form the Phosphagen kinase C-terminal domain; the sequence is FIVSTRIRCG…KKLIELEKAA (238 aa). ATP contacts are provided by residues 125-129 and His189; that span reads STRIR. Glu229 provides a ligand contact to substrate. Arg233 is an ATP binding site. Position 275 (Cys275) interacts with substrate. ATP is bound by residues 284-288, 312-317, and Asp327; these read RASVH and RGIHGE. Glu317 provides a ligand contact to substrate.

It belongs to the ATP:guanido phosphotransferase family.

The catalysed reaction is L-arginine + ATP = N(omega)-phospho-L-arginine + ADP + H(+). The sequence is that of Probable arginine kinase ZC434.8 from Caenorhabditis elegans.